A 35-amino-acid polypeptide reads, in one-letter code: Cecropin-B (35 aa).

Leucine 35 bears the Leucine amide mark.

This sequence belongs to the cecropin family.

Its subcellular location is the secreted. In terms of biological role, cecropins have lytic and antibacterial activity against several Gram-positive and Gram-negative bacteria. This is Cecropin-B from Antheraea pernyi (Chinese oak silk moth).